A 590-amino-acid polypeptide reads, in one-letter code: UvrABC system protein C (590 aa).

Residues 14 to 91 (DQPGCYLMKD…IKKYDPKYNV (78 aa)) enclose the GIY-YIG domain. The UVR domain occupies 196–231 (NEIKKELEAKMAEAAEKLEFERAKEFRDQLAHIEST).

It belongs to the UvrC family. Interacts with UvrB in an incision complex.

The protein localises to the cytoplasm. The UvrABC repair system catalyzes the recognition and processing of DNA lesions. UvrC both incises the 5' and 3' sides of the lesion. The N-terminal half is responsible for the 3' incision and the C-terminal half is responsible for the 5' incision. This is UvrABC system protein C from Bacillus velezensis (strain DSM 23117 / BGSC 10A6 / LMG 26770 / FZB42) (Bacillus amyloliquefaciens subsp. plantarum).